The sequence spans 450 residues: Probable ECA polymerase (450 aa).

Helical transmembrane passes span 6–26, 37–57, 63–83, 120–140, 155–175, 181–201, 207–227, 228–248, 341–361, 378–398, and 410–430; these read FSGLLVVWLLSTLFIATLTWF, VFFSLLFLLTFFFGFPLTSVL, VGVAPPEILLQALLSAACFYA, LMGIALVSVGIFFMHNGFLLF, GVALKRFFYFFIPAMLVIYFL, AWLFFLVSTVAFGLLTYMIVG, IIIAFAIFLFIGIIRGWISLW, MLVAAGVLGIVGMFWLALKRY, LVVMGGALFIPLGAVAVGLII, YKAAILHSFCFGAIFNMIVLA, and VFFLVIFGACLLVAKLLFWLF.

This sequence belongs to the WzyE family. Probably part of a complex composed of WzxE, WzyE and WzzE.

It is found in the cell inner membrane. Its pathway is bacterial outer membrane biogenesis; enterobacterial common antigen biosynthesis. In terms of biological role, probably involved in the polymerization of enterobacterial common antigen (ECA) trisaccharide repeat units. This is Probable ECA polymerase from Citrobacter koseri (strain ATCC BAA-895 / CDC 4225-83 / SGSC4696).